A 242-amino-acid polypeptide reads, in one-letter code: Probable transcriptional regulatory protein NGO_1291 (242 aa).

This sequence belongs to the TACO1 family.

Its subcellular location is the cytoplasm. The chain is Probable transcriptional regulatory protein NGO_1291 from Neisseria gonorrhoeae (strain ATCC 700825 / FA 1090).